The sequence spans 367 residues: CCCH-type zinc finger protein moe-3 (367 aa).

Basic and acidic residues predominate over residues 1-15 (MSKVKGDLEKSDKRP). Positions 1 to 57 (MSKVKGDLEKSDKRPPSSMSTGSADSGVFSSGVHASSPSHSQGSSSQSGPPSPTTQL) are disordered. The segment covering 30–49 (SSGVHASSPSHSQGSSSQSG) has biased composition (low complexity). Residues 63-92 (ETANLIAVNEQLRKEIAENKQIQTNQMRAL) are a coiled coil. Residues 107–126 (SISPHHGFPQRPPRGERRMQ) form a disordered region. 2 consecutive C3H1-type zinc fingers follow at residues 130 to 158 (SYKTVICQAWLESKTCTFAENCRFAHGEE) and 172 to 200 (KYKTKLCDKYTTTGLCPYGKRCLFIHPDN). The tract at residues 235 to 268 (NTRNSYNQQPPPMGGLEMQSSPMKSSSDSSHMRS) is disordered. The span at 252-268 (MQSSPMKSSSDSSHMRS) shows a compositional bias: low complexity.

Exclusively expressed in the hermaphrodite gonad. Weakly distributed throughout gonadal oocytes from the mitotic stage to the developing diakinesis stage, with expression restricted to the distal region of the gonad.

Its function is as follows. Zinc-finger protein that may play a role in oocyte maturation and fertility. This Caenorhabditis elegans protein is CCCH-type zinc finger protein moe-3.